A 460-amino-acid chain; its full sequence is GTPase Der (460 aa).

2 EngA-type G domains span residues 21–187 and 198–373; these read PRVV…FSVD and VRLA…AQLN. GTP is bound by residues 27 to 34, 74 to 78, 141 to 144, 204 to 211, 251 to 255, and 316 to 319; these read GRPNVGKS, DTSGF, NKTE, GKPNTGKS, DTAGI, and NKWD. The KH-like domain occupies 374 to 457; that stretch reads TKVETSALNT…PVKLTIRKNC (84 aa).

Belongs to the TRAFAC class TrmE-Era-EngA-EngB-Septin-like GTPase superfamily. EngA (Der) GTPase family. Associates with the 50S ribosomal subunit.

Its function is as follows. GTPase that plays an essential role in the late steps of ribosome biogenesis. The polypeptide is GTPase Der (Treponema pallidum subsp. pallidum (strain SS14)).